Reading from the N-terminus, the 256-residue chain is MSLAVRVIPCLDVDAGRVVKGVHFENLKDAGDPVELAAEYYRQGADEITFLDVTASSSHRNTMIDVVSCTAEQVFIPMTVGGGVRTPEDVDSLLRCGADKVGVNTAAINDPSLISRVADRFGNQVLVLSVDARREKGEQHTQSGFEVTTMGGRKSTGIDAIWWVKRAEQLGAGEILLNSMDADGTKEGFDLEMIRAVRKEVKIPIIASGGAGKVEDFPPAIEAGADAVLAASVFHYGILTIADVKAELKKHGYTVR.

Catalysis depends on residues Asp-12 and Asp-131.

It belongs to the HisA/HisF family. Heterodimer of HisH and HisF.

It is found in the cytoplasm. It catalyses the reaction 5-[(5-phospho-1-deoxy-D-ribulos-1-ylimino)methylamino]-1-(5-phospho-beta-D-ribosyl)imidazole-4-carboxamide + L-glutamine = D-erythro-1-(imidazol-4-yl)glycerol 3-phosphate + 5-amino-1-(5-phospho-beta-D-ribosyl)imidazole-4-carboxamide + L-glutamate + H(+). The protein operates within amino-acid biosynthesis; L-histidine biosynthesis; L-histidine from 5-phospho-alpha-D-ribose 1-diphosphate: step 5/9. IGPS catalyzes the conversion of PRFAR and glutamine to IGP, AICAR and glutamate. The HisF subunit catalyzes the cyclization activity that produces IGP and AICAR from PRFAR using the ammonia provided by the HisH subunit. The chain is Imidazole glycerol phosphate synthase subunit HisF from Bifidobacterium longum (strain DJO10A).